A 290-amino-acid chain; its full sequence is Elongation factor Ts (290 aa).

The segment at 81–84 (TDFV) is involved in Mg(2+) ion dislocation from EF-Tu.

Belongs to the EF-Ts family.

It is found in the cytoplasm. In terms of biological role, associates with the EF-Tu.GDP complex and induces the exchange of GDP to GTP. It remains bound to the aminoacyl-tRNA.EF-Tu.GTP complex up to the GTP hydrolysis stage on the ribosome. The protein is Elongation factor Ts of Vesicomyosocius okutanii subsp. Calyptogena okutanii (strain HA).